The following is a 463-amino-acid chain: Annexin A7 (463 aa).

Over residues methionine 1 to proline 18 the composition is skewed to pro residues. Disordered stretches follow at residues methionine 1 to tyrosine 34 and serine 77 to glycine 149. Positions methionine 1 to proline 143 are repeat-rich region. The tract at residues glycine 5 to alanine 20 is 3 X 5 AA tandem repeats of G-Y-P-P-X. The span at glycine 86–phenylalanine 99 shows a compositional bias: gly residues. 4 Annexin repeats span residues phenylalanine 160–methionine 231, proline 232–glutamine 303, glutamine 315–glutamine 387, and asparagine 391–glycine 462. Lysine 208 carries the N6-acetyllysine modification.

This sequence belongs to the annexin family. In terms of assembly, interacts with PDCD6.

In terms of biological role, calcium/phospholipid-binding protein which promotes membrane fusion and is involved in exocytosis. The sequence is that of Annexin A7 (Anxa7) from Mus musculus (Mouse).